Reading from the N-terminus, the 429-residue chain is Homocysteine synthase (429 aa).

An N6-(pyridoxal phosphate)lysine modification is found at lysine 210.

Belongs to the trans-sulfuration enzymes family. In terms of assembly, homotetramer. Requires pyridoxal 5'-phosphate as cofactor.

Its subcellular location is the cytoplasm. It is found in the nucleus. The enzyme catalyses O-acetyl-L-homoserine + methanethiol = L-methionine + acetate + H(+). It carries out the reaction O-acetyl-L-homoserine + hydrogen sulfide = L-homocysteine + acetate. It participates in amino-acid biosynthesis; L-methionine biosynthesis via de novo pathway; L-homocysteine from O-acetyl-L-homoserine. In terms of biological role, catalyzes the conversion of O-acetyl-L-homoserine (OAH) into homocysteine in the methionine biosynthesis pathway. Can also use O-succinyl-L-homoserine and L-homoserine as substrates. Also has cysteine synthase (O-acetylserine sulfhydrylase) activity in vitro, but in S.pombe, it seems only to be involved in the alternative pathway of methionine biosynthesis under cysteine deficiency conditions. This Schizosaccharomyces pombe (strain 972 / ATCC 24843) (Fission yeast) protein is Homocysteine synthase.